A 213-amino-acid polypeptide reads, in one-letter code: MKPYQRQFIEFALSKQVLKFGEFTLKSGRKSPYFFNAGLFNTGRDLALLGRFYAEALVDSGIEFDLLFGPAYKGIPIATTTAVALAEHHDRDLPYCFNRKEAKNHGEGGNLVGSPLQGRVMLVDDVITAGTAIRESMEIIQAQGALLAGVLISLDRQERGRGEISAIQEVERDYGCQVISIITLKELIAYLEEKPEMAEHLASVRAYREAYGV.

5-phospho-alpha-D-ribose 1-diphosphate is bound at residue lysine 26. 34–35 (FF) is an orotate binding site. Residues 72–73 (YK), arginine 99, lysine 100, lysine 103, histidine 105, and 124–132 (DDVITAGTA) contribute to the 5-phospho-alpha-D-ribose 1-diphosphate site. The orotate site is built by threonine 128 and arginine 156.

This sequence belongs to the purine/pyrimidine phosphoribosyltransferase family. PyrE subfamily. In terms of assembly, homodimer. Requires Mg(2+) as cofactor.

It catalyses the reaction orotidine 5'-phosphate + diphosphate = orotate + 5-phospho-alpha-D-ribose 1-diphosphate. It participates in pyrimidine metabolism; UMP biosynthesis via de novo pathway; UMP from orotate: step 1/2. In terms of biological role, catalyzes the transfer of a ribosyl phosphate group from 5-phosphoribose 1-diphosphate to orotate, leading to the formation of orotidine monophosphate (OMP). This is Orotate phosphoribosyltransferase from Klebsiella pneumoniae subsp. pneumoniae (strain ATCC 700721 / MGH 78578).